A 275-amino-acid chain; its full sequence is NH(3)-dependent NAD(+) synthetase (275 aa).

46 to 53 (GISGGQDS) contacts ATP. Mg(2+) is bound at residue Asp-52. Arg-140 contributes to the deamido-NAD(+) binding site. Thr-160 serves as a coordination point for ATP. Residue Glu-165 coordinates Mg(2+). 2 residues coordinate deamido-NAD(+): Lys-173 and Asp-180. Lys-189 and Thr-211 together coordinate ATP. 260–261 (HK) is a binding site for deamido-NAD(+).

This sequence belongs to the NAD synthetase family. In terms of assembly, homodimer.

It carries out the reaction deamido-NAD(+) + NH4(+) + ATP = AMP + diphosphate + NAD(+) + H(+). It functions in the pathway cofactor biosynthesis; NAD(+) biosynthesis; NAD(+) from deamido-NAD(+) (ammonia route): step 1/1. Catalyzes the ATP-dependent amidation of deamido-NAD to form NAD. Uses ammonia as a nitrogen source. The polypeptide is NH(3)-dependent NAD(+) synthetase (Salmonella paratyphi A (strain ATCC 9150 / SARB42)).